An 85-amino-acid chain; its full sequence is Acyl carrier protein (85 aa).

The 77-residue stretch at 2-78 (SQISERVIDL…DAIAYIESHA (77 aa)) folds into the Carrier domain. Residue S37 is modified to O-(pantetheine 4'-phosphoryl)serine.

Belongs to the acyl carrier protein (ACP) family. In terms of processing, 4'-phosphopantetheine is transferred from CoA to a specific serine of apo-ACP by AcpS. This modification is essential for activity because fatty acids are bound in thioester linkage to the sulfhydryl of the prosthetic group.

Its subcellular location is the cytoplasm. Its pathway is lipid metabolism; fatty acid biosynthesis. Its function is as follows. Carrier of the growing fatty acid chain in fatty acid biosynthesis. In Azobacteroides pseudotrichonymphae genomovar. CFP2, this protein is Acyl carrier protein.